The chain runs to 279 residues: Zinc finger AN1 and C2H2 domain-containing stress-associated protein 11 (279 aa).

2 consecutive AN1-type zinc fingers follow at residues 7-55 and 95-145; these read PDLG…REDV and ATKK…KLPF. Residues C13, C18, C28, C31, C36, H39, H45, C47, C101, C106, C118, C121, C126, H129, H135, and C137 each contribute to the Zn(2+) site. A disordered region spans residues 152 to 178; sequence STTRKEAKTTRPNKAHPSTSSSSSSSR. A compositionally biased stretch (low complexity) spans 169–178; it reads STSSSSSSSR. 2 C2H2-type zinc fingers span residues 213-236 and 250-273; these read EVCP…EKTH and DVCP…ERDH.

Functionally, may be involved in environmental stress response. This is Zinc finger AN1 and C2H2 domain-containing stress-associated protein 11 (SAP11) from Arabidopsis thaliana (Mouse-ear cress).